Consider the following 398-residue polypeptide: Sphingosine 1-phosphate receptor 5 (398 aa).

Topologically, residues 1 to 40 are extracellular; it reads MESGLLRPAPVSEVIVLHYNYTGKLRGARYQPGAGLRADA. N-linked (GlcNAc...) asparagine glycosylation occurs at Asn20. The helical transmembrane segment at 41 to 61 threads the bilayer; it reads VVCLAVCAFIVLENLAVLLVL. Topologically, residues 62 to 70 are cytoplasmic; the sequence is GRHPRFHAP. A helical membrane pass occupies residues 71 to 91; it reads MFLLLGSLTLSDLLAGAAYAA. The Extracellular portion of the chain corresponds to 92 to 111; it reads NILLSGPLTLKLSPALWFAR. A helical membrane pass occupies residues 112–132; that stretch reads EGGVFVALTASVLSLLAIALE. The Cytoplasmic portion of the chain corresponds to 133–151; it reads RSLTMARRGPAPVSSRGRT. The chain crosses the membrane as a helical span at residues 152–172; the sequence is LAMAAAAWGVSLLLGLLPALG. Over 173 to 192 the chain is Extracellular; sequence WNCLGRLDACSTVLPLYAKA. A helical membrane pass occupies residues 193-213; it reads YVLFCVLAFVGILAAICALYA. The Cytoplasmic portion of the chain corresponds to 214–252; it reads RIYCQVRANARRLPARPGTAGTTSTRARRKPRSLALLRT. Residues 253–273 form a helical membrane-spanning segment; that stretch reads LSVVLLAFVACWGPLFLLLLL. The Extracellular portion of the chain corresponds to 274-287; it reads DVACPARTCPVLLQ. Residues 288 to 308 form a helical membrane-spanning segment; it reads ADPFLGLAMANSLLNPIIYTL. Topologically, residues 309–398 are cytoplasmic; that stretch reads TNRDLRHALL…RTLVSEPAAD (90 aa). Cys323 carries S-palmitoyl cysteine lipidation. Residues 329–398 form a disordered region; that stretch reads GRDPSGSQQS…RTLVSEPAAD (70 aa). Low complexity predominate over residues 333-347; sequence SGSQQSASAAEASGG. Position 381 is a phosphoserine (Ser381).

Belongs to the G-protein coupled receptor 1 family. Widely expressed in the brain, most prominently in the corpus callosum, which is predominantly white matter. Detected in spleen, peripheral blood leukocytes, placenta, lung, aorta and fetal spleen. Low-level signal detected in many tissue extracts. Overexpressed in leukemic large granular lymphocytes. Isoform 1 is predominantly expressed in peripheral tissues. Isoform 2 is expressed in brain, spleen and peripheral blood leukocytes.

The protein resides in the cell membrane. Its function is as follows. Receptor for the lysosphingolipid sphingosine 1-phosphate (S1P). S1P is a bioactive lysophospholipid that elicits diverse physiological effect on most types of cells and tissues. Is coupled to both the G(i/0)alpha and G(12) subclass of heteromeric G-proteins. May play a regulatory role in the transformation of radial glial cells into astrocytes and may affect proliferative activity of these cells. The polypeptide is Sphingosine 1-phosphate receptor 5 (S1PR5) (Homo sapiens (Human)).